The primary structure comprises 285 residues: Glutamate racemase (285 aa).

Residues 28 to 29 (DS) and 60 to 61 (YG) each bind substrate. Residue cysteine 92 is the Proton donor/acceptor of the active site. Substrate is bound at residue 93-94 (NT). The active-site Proton donor/acceptor is the cysteine 204. 205–206 (TH) contacts substrate.

This sequence belongs to the aspartate/glutamate racemases family.

The enzyme catalyses L-glutamate = D-glutamate. The protein operates within cell wall biogenesis; peptidoglycan biosynthesis. In terms of biological role, provides the (R)-glutamate required for cell wall biosynthesis. The protein is Glutamate racemase of Escherichia coli O7:K1 (strain IAI39 / ExPEC).